Here is a 545-residue protein sequence, read N- to C-terminus: MSYSIGIDYGTASGRVFLINTTNGQVVSKFVKPYTHGVIESELNGLKIPHTYALQNSNDYLEIMEEGISYIVRESKIDPDNIVGIGIDFTSSTIIFTDENLNPVHNLKQFKNNPHAYVKLWKHHGAYKEAEKLYQTAIENNNKWLGHYGYNVSSEWMIPKIMEVMNRAPEIMEKTAYIMEAGDWIVNKLTNKNVRSNCGLGFKAFWEEETGFHYDLFDKIDPKLSKVIQDKVSAPVVNIGEAVGKLDDKMAQKLGLSKETMVSPFIIDAHASLLGIGSEKDKEMTMVMGTSTCHLMLNEKQHQVPGISGSVKGAIIPELFAYEAGQSAVGDLFEYVAKQAPKSYVDEAENRNMTVFELMNEKIKHQMPGESGLIALDWHNGNRSVLSDSNLTGCIFGLTLQTKHEDIYRAYLEATAFGTKMIMQQYQDWHMEVEKVFACGGIPKKNAVMMDIYANVLNKKLIVMDSEYAPAIGAAILGAVSGGAHNSINDAVDAMKEPILYEINPEAEKVQRYETLFKAYKALHDIHGYKKANIMKDIQSLRVEG.

It belongs to the ribulokinase family.

It carries out the reaction D-ribulose + ATP = D-ribulose 5-phosphate + ADP + H(+). The catalysed reaction is L-ribulose + ATP = L-ribulose 5-phosphate + ADP + H(+). The protein operates within carbohydrate degradation; L-arabinose degradation via L-ribulose; D-xylulose 5-phosphate from L-arabinose (bacterial route): step 2/3. The sequence is that of Ribulokinase from Staphylococcus aureus (strain USA300).